Here is a 784-residue protein sequence, read N- to C-terminus: DNA ligase (784 aa).

NAD(+) is bound by residues D31 to D35, S80 to L81, and E120. K122 (N6-AMP-lysine intermediate) is an active-site residue. R143, E180, K296, and K320 together coordinate NAD(+). Zn(2+)-binding residues include C414, C417, C444, and C450. Positions A701–L784 constitute a BRCT domain.

It belongs to the NAD-dependent DNA ligase family. LigA subfamily. Requires Mg(2+) as cofactor. Mn(2+) is required as a cofactor.

It catalyses the reaction NAD(+) + (deoxyribonucleotide)n-3'-hydroxyl + 5'-phospho-(deoxyribonucleotide)m = (deoxyribonucleotide)n+m + AMP + beta-nicotinamide D-nucleotide.. Functionally, DNA ligase that catalyzes the formation of phosphodiester linkages between 5'-phosphoryl and 3'-hydroxyl groups in double-stranded DNA using NAD as a coenzyme and as the energy source for the reaction. It is essential for DNA replication and repair of damaged DNA. The chain is DNA ligase from Pseudomonas entomophila (strain L48).